A 139-amino-acid chain; its full sequence is ATP synthase epsilon chain (139 aa).

The protein belongs to the ATPase epsilon chain family. F-type ATPases have 2 components, CF(1) - the catalytic core - and CF(0) - the membrane proton channel. CF(1) has five subunits: alpha(3), beta(3), gamma(1), delta(1), epsilon(1). CF(0) has three main subunits: a, b and c.

The protein resides in the cell inner membrane. In terms of biological role, produces ATP from ADP in the presence of a proton gradient across the membrane. The sequence is that of ATP synthase epsilon chain from Enterobacter sp. (strain 638).